Consider the following 322-residue polypeptide: Ferredoxin--NADP reductase (322 aa).

7 residues coordinate FAD: Asp34, Gln42, Tyr47, Val87, Phe120, Asp279, and Thr320.

This sequence belongs to the ferredoxin--NADP reductase type 2 family. Homodimer. Requires FAD as cofactor.

The catalysed reaction is 2 reduced [2Fe-2S]-[ferredoxin] + NADP(+) + H(+) = 2 oxidized [2Fe-2S]-[ferredoxin] + NADPH. In Streptococcus gordonii (strain Challis / ATCC 35105 / BCRC 15272 / CH1 / DL1 / V288), this protein is Ferredoxin--NADP reductase.